The following is a 213-amino-acid chain: Isopentenyl-diphosphate Delta-isomerase (213 aa).

Residues 1-10 (MRDSMSEADR) show a composition bias toward basic and acidic residues. Positions 1-34 (MRDSMSEADRSSPGSGKTDREDETAENATQDVIA) are disordered. The Mn(2+) site is built by histidine 51, histidine 58, and histidine 95. Residues 56–193 (VRHRAFTCLL…RQLRLCPWFE (138 aa)) enclose the Nudix hydrolase domain. Glutamate 113 is a Mg(2+) binding site. Mn(2+) is bound by residues glutamate 142 and glutamate 144. The active site involves glutamate 144.

It belongs to the IPP isomerase type 1 family. Requires Mg(2+) as cofactor. The cofactor is Mn(2+).

The protein resides in the cytoplasm. It catalyses the reaction isopentenyl diphosphate = dimethylallyl diphosphate. Its pathway is isoprenoid biosynthesis; dimethylallyl diphosphate biosynthesis; dimethylallyl diphosphate from isopentenyl diphosphate: step 1/1. In terms of biological role, catalyzes the 1,3-allylic rearrangement of the homoallylic substrate isopentenyl (IPP) to its highly electrophilic allylic isomer, dimethylallyl diphosphate (DMAPP). The sequence is that of Isopentenyl-diphosphate Delta-isomerase from Halobacterium salinarum (strain ATCC 700922 / JCM 11081 / NRC-1) (Halobacterium halobium).